The following is a 155-amino-acid chain: Small ribosomal subunit protein uS7c (155 aa).

This sequence belongs to the universal ribosomal protein uS7 family. Part of the 30S ribosomal subunit.

Its subcellular location is the plastid. In terms of biological role, one of the primary rRNA binding proteins, it binds directly to 16S rRNA where it nucleates assembly of the head domain of the 30S subunit. This chain is Small ribosomal subunit protein uS7c (rps7), found in Aneura mirabilis (Parasitic liverwort).